Here is a 964-residue protein sequence, read N- to C-terminus: Translation initiation factor IF-2 (964 aa).

Positions 35 to 353 are disordered; that stretch reads ASSTIEPPVV…RQKRNEYESM (319 aa). The span at 64-108 shows a compositional bias: low complexity; that stretch reads KPTPAKPAAKPGAPAPKPGTAQKPTAPTPGAVAAPKPGTAAAKPT. A compositionally biased stretch (pro residues) spans 124-133; it reads PAKPTAPKPA. Positions 145–155 are enriched in basic and acidic residues; the sequence is AAKKAAEDKAT. Positions 166-178 are enriched in pro residues; sequence NAMPRPMAKPGPK. Over residues 220–233 the composition is skewed to low complexity; it reads PRPQGGQRSGAPRD. Composition is skewed to gly residues over residues 234–252 and 290–333; these read GQGG…GPRP and GKGG…GRPG. A compositionally biased stretch (basic residues) spans 337–346; that stretch reads RRGRKSKRQK. Residues 459–631 enclose the tr-type G domain; sequence KRPPVVTVMG…VCLTADAELD (173 aa). Positions 468–475 are G1; the sequence is GHVDHGKT. A GTP-binding site is contributed by 468–475; the sequence is GHVDHGKT. Residues 493–497 are G2; that stretch reads GITQG. A G3 region spans residues 518–521; sequence DTPG. GTP is bound by residues 518-522 and 572-575; these read DTPGH and NKID. The segment at 572–575 is G4; that stretch reads NKID. A G5 region spans residues 608–610; that stretch reads SAK.

Belongs to the TRAFAC class translation factor GTPase superfamily. Classic translation factor GTPase family. IF-2 subfamily.

Its subcellular location is the cytoplasm. Functionally, one of the essential components for the initiation of protein synthesis. Protects formylmethionyl-tRNA from spontaneous hydrolysis and promotes its binding to the 30S ribosomal subunits. Also involved in the hydrolysis of GTP during the formation of the 70S ribosomal complex. This Corynebacterium efficiens (strain DSM 44549 / YS-314 / AJ 12310 / JCM 11189 / NBRC 100395) protein is Translation initiation factor IF-2.